A 355-amino-acid chain; its full sequence is Uroporphyrinogen decarboxylase (355 aa).

Residues 27–31 (RQAGR), Asp78, Tyr155, Ser210, and His328 contribute to the substrate site.

This sequence belongs to the uroporphyrinogen decarboxylase family. Homodimer.

It localises to the cytoplasm. It carries out the reaction uroporphyrinogen III + 4 H(+) = coproporphyrinogen III + 4 CO2. It functions in the pathway porphyrin-containing compound metabolism; protoporphyrin-IX biosynthesis; coproporphyrinogen-III from 5-aminolevulinate: step 4/4. Catalyzes the decarboxylation of four acetate groups of uroporphyrinogen-III to yield coproporphyrinogen-III. In Azotobacter vinelandii (strain DJ / ATCC BAA-1303), this protein is Uroporphyrinogen decarboxylase.